The chain runs to 193 residues: ATP synthase subunit b 2 (193 aa).

Residues 44–64 (IFWLVLTLLAIYFVLTKIALP) form a helical membrane-spanning segment.

Belongs to the ATPase B chain family. F-type ATPases have 2 components, F(1) - the catalytic core - and F(0) - the membrane proton channel. F(1) has five subunits: alpha(3), beta(3), gamma(1), delta(1), epsilon(1). F(0) has three main subunits: a(1), b(2) and c(10-14). The alpha and beta chains form an alternating ring which encloses part of the gamma chain. F(1) is attached to F(0) by a central stalk formed by the gamma and epsilon chains, while a peripheral stalk is formed by the delta and b chains.

It is found in the cell inner membrane. F(1)F(0) ATP synthase produces ATP from ADP in the presence of a proton or sodium gradient. F-type ATPases consist of two structural domains, F(1) containing the extramembraneous catalytic core and F(0) containing the membrane proton channel, linked together by a central stalk and a peripheral stalk. During catalysis, ATP synthesis in the catalytic domain of F(1) is coupled via a rotary mechanism of the central stalk subunits to proton translocation. Its function is as follows. Component of the F(0) channel, it forms part of the peripheral stalk, linking F(1) to F(0). The b'-subunit is a diverged and duplicated form of b found in plants and photosynthetic bacteria. This chain is ATP synthase subunit b 2 (atpF2), found in Jannaschia sp. (strain CCS1).